We begin with the raw amino-acid sequence, 427 residues long: Glutamate-1-semialdehyde 2,1-aminomutase (427 aa).

Position 265 is an N6-(pyridoxal phosphate)lysine (lysine 265).

It belongs to the class-III pyridoxal-phosphate-dependent aminotransferase family. HemL subfamily. As to quaternary structure, homodimer. Pyridoxal 5'-phosphate is required as a cofactor.

It localises to the cytoplasm. It carries out the reaction (S)-4-amino-5-oxopentanoate = 5-aminolevulinate. It functions in the pathway porphyrin-containing compound metabolism; protoporphyrin-IX biosynthesis; 5-aminolevulinate from L-glutamyl-tRNA(Glu): step 2/2. This Burkholderia pseudomallei (strain 668) protein is Glutamate-1-semialdehyde 2,1-aminomutase.